Consider the following 417-residue polypeptide: Acid phosphatase (417 aa).

Residues 1 to 19 (MFTKQSLVTLLGGLSLAVA) form the signal peptide. Residues asparagine 122, asparagine 187, and asparagine 209 are each glycosylated (N-linked (GlcNAc...) asparagine). Catalysis depends on aspartate 216, which acts as the Proton donor. N-linked (GlcNAc...) asparagine glycans are attached at residues asparagine 218, asparagine 333, and asparagine 383.

Post-translationally, the N-terminus is blocked.

The protein localises to the secreted. It carries out the reaction a phosphate monoester + H2O = an alcohol + phosphate. The chain is Acid phosphatase (phoA) from Aspergillus niger.